The primary structure comprises 190 residues: Large ribosomal subunit protein uL5 (190 aa).

It belongs to the universal ribosomal protein uL5 family. As to quaternary structure, part of the 50S ribosomal subunit; part of the 5S rRNA/L5/L18/L25 subcomplex. Contacts the 5S rRNA and the P site tRNA. Forms a bridge to the 30S subunit in the 70S ribosome.

In terms of biological role, this is one of the proteins that bind and probably mediate the attachment of the 5S RNA into the large ribosomal subunit, where it forms part of the central protuberance. In the 70S ribosome it contacts protein S13 of the 30S subunit (bridge B1b), connecting the 2 subunits; this bridge is implicated in subunit movement. Contacts the P site tRNA; the 5S rRNA and some of its associated proteins might help stabilize positioning of ribosome-bound tRNAs. The chain is Large ribosomal subunit protein uL5 from Bifidobacterium adolescentis (strain ATCC 15703 / DSM 20083 / NCTC 11814 / E194a).